We begin with the raw amino-acid sequence, 592 residues long: Aspartate--tRNA ligase (592 aa).

Glutamate 173 is a binding site for L-aspartate. Residues 197 to 200 form an aspartate region; the sequence is QLFK. L-aspartate is bound at residue arginine 219. ATP-binding positions include 219–221 and glutamine 228; that span reads RDE. Histidine 448 contacts L-aspartate. Glutamate 482 serves as a coordination point for ATP. Arginine 489 contacts L-aspartate. 534 to 537 is an ATP binding site; sequence GLDR.

Belongs to the class-II aminoacyl-tRNA synthetase family. Type 1 subfamily. As to quaternary structure, homodimer.

The protein localises to the cytoplasm. The catalysed reaction is tRNA(Asp) + L-aspartate + ATP = L-aspartyl-tRNA(Asp) + AMP + diphosphate. Catalyzes the attachment of L-aspartate to tRNA(Asp) in a two-step reaction: L-aspartate is first activated by ATP to form Asp-AMP and then transferred to the acceptor end of tRNA(Asp). The polypeptide is Aspartate--tRNA ligase (Shewanella putrefaciens (strain CN-32 / ATCC BAA-453)).